The sequence spans 300 residues: GTP-binding protein At2g22870 (300 aa).

Positions 119–297 (DRPEIAILGR…LLHMSQLRNY (179 aa)) constitute an EngB-type G domain. GTP-binding positions include 127-134 (GRSNVGKS), 154-158 (GKTQL), 172-175 (DLPG), 239-242 (TKCD), and 276-278 (TSS). Positions 134 and 156 each coordinate Mg(2+).

The protein belongs to the TRAFAC class TrmE-Era-EngA-EngB-Septin-like GTPase superfamily. EngB GTPase family. Mg(2+) serves as cofactor.

In Arabidopsis thaliana (Mouse-ear cress), this protein is GTP-binding protein At2g22870 (EMB2001).